A 190-amino-acid polypeptide reads, in one-letter code: NADH-dependent phenylglyoxylate dehydrogenase subunit gamma (190 aa).

In terms of assembly, dimer of heteropentamers composed of an alpha (PadG), a beta (PadI), a gamma (PadE), a delta (PadF) and an epsilon (PadH) subunit.

The enzyme catalyses phenylglyoxylate + NAD(+) + CoA = benzoyl-CoA + CO2 + NADH. Its activity is regulated as follows. Activated by magnesium ions and thiamine diphosphate. Involved in the anaerobic metabolism of phenylalanine and phenylacetate. Catalyzes the oxidative decarboxylation of phenylglyoxylate to benzoyl-CoA and CO(2). It can also react slowly with 2-oxo-3-methylbutanoate and use different electron acceptors such as benzyl viologen, methyl viologen, FAD or FMN, but NAD seems to be the physiological electron acceptor. Also catalyzes an isotope exchange between CO(2) and the carboxyl group which proves partial or complete reversibility of the oxidative decarboxylation reaction. This chain is NADH-dependent phenylglyoxylate dehydrogenase subunit gamma (padE), found in Aromatoleum evansii (Azoarcus evansii).